Consider the following 373-residue polypeptide: D-alanine--D-alanine ligase (373 aa).

The region spanning 165–369 (KRLAREAGIP…FGDLVSALIA (205 aa)) is the ATP-grasp domain. 192-247 (KERLGLPVFVKPARGGSSIGISKVDSWEEFDAAIDLAFSNDNKVIVEAMIHGAEVE) is an ATP binding site. The Mg(2+) site is built by D324, E336, and N338.

Belongs to the D-alanine--D-alanine ligase family. The cofactor is Mg(2+). Requires Mn(2+) as cofactor.

Its subcellular location is the cytoplasm. It catalyses the reaction 2 D-alanine + ATP = D-alanyl-D-alanine + ADP + phosphate + H(+). The protein operates within cell wall biogenesis; peptidoglycan biosynthesis. Cell wall formation. The sequence is that of D-alanine--D-alanine ligase from Corynebacterium jeikeium (strain K411).